A 40-amino-acid polypeptide reads, in one-letter code: Photosystem II reaction center protein J (40 aa).

Residues Ile8–Phe28 traverse the membrane as a helical segment.

Belongs to the PsbJ family. PSII is composed of 1 copy each of membrane proteins PsbA, PsbB, PsbC, PsbD, PsbE, PsbF, PsbH, PsbI, PsbJ, PsbK, PsbL, PsbM, PsbT, PsbX, PsbY, PsbZ, Psb30/Ycf12, at least 3 peripheral proteins of the oxygen-evolving complex and a large number of cofactors. It forms dimeric complexes.

The protein resides in the plastid. The protein localises to the chloroplast thylakoid membrane. In terms of biological role, one of the components of the core complex of photosystem II (PSII). PSII is a light-driven water:plastoquinone oxidoreductase that uses light energy to abstract electrons from H(2)O, generating O(2) and a proton gradient subsequently used for ATP formation. It consists of a core antenna complex that captures photons, and an electron transfer chain that converts photonic excitation into a charge separation. The chain is Photosystem II reaction center protein J from Physcomitrium patens (Spreading-leaved earth moss).